Here is a 467-residue protein sequence, read N- to C-terminus: MQRWVLHIDMDAFFASCEQLTRPTLRGRPVLVGGVSGRGVVAGASYEARKFGARSAMPMHQAKARVGFGAVVVTPRHIVYSAASRRVFQIVEKRAGIVERLSIDEGFMEPEALVGATPEEVKQWAEELRAEIKEVTGLPSSVGAGSGKQIAKIGSGEAKPDGVFVVPVDKQHDLLDPLPVGALWGVGPVTGSKLASMGVETIGDLAALTQKEVEISLGATIGISLWNLARGIDDRPVEPRAEAKQISQEHTYEKDLLTRQQVDAAIIRSAEGAHRRLLKDGRGARTVSVKLRMADFRIESRSYTLSYATDDYATLEATAFRLARYPGEVGPIRLVGVSFSGLEESRQDILFPELDQQIIVPPAPDTDYEVGVQSSSSSESTQVEAPQDVALSMWCATQDVYHPEYGHGWVQGAGHGVVSVRFETRSTTKGRTKSFSMDDPDLTPADPLDSLDWADWFAENGETGDDE.

The UmuC domain occupies 5-187 (VLHIDMDAFF…LPVGALWGVG (183 aa)). Asp-9 and Asp-104 together coordinate Mg(2+). The active site involves Glu-105. Disordered stretches follow at residues 364–383 (PDTDYEVGVQSSSSSESTQV) and 429–449 (KGRTKSFSMDDPDLTPADPLD).

It belongs to the DNA polymerase type-Y family. As to quaternary structure, monomer. Mg(2+) is required as a cofactor.

Its subcellular location is the cytoplasm. The enzyme catalyses DNA(n) + a 2'-deoxyribonucleoside 5'-triphosphate = DNA(n+1) + diphosphate. Its function is as follows. Poorly processive, error-prone DNA polymerase involved in untargeted mutagenesis. Copies undamaged DNA at stalled replication forks, which arise in vivo from mismatched or misaligned primer ends. These misaligned primers can be extended by PolIV. Exhibits no 3'-5' exonuclease (proofreading) activity. May be involved in translesional synthesis, in conjunction with the beta clamp from PolIII. The chain is DNA polymerase IV from Corynebacterium glutamicum (strain ATCC 13032 / DSM 20300 / JCM 1318 / BCRC 11384 / CCUG 27702 / LMG 3730 / NBRC 12168 / NCIMB 10025 / NRRL B-2784 / 534).